The following is a 270-amino-acid chain: MSTLDLNHLADLYDRKDWNACKKELLKLKVELAKQNLFVPTSDKEKASFARNVFEYGVLVSIQTCDIESFARYASQVIPFYHDSLVPSSRMGLVTGLNLLYLLSENRIAEFHTALESVPDKSLFERDPYVEWVISLEQNVMEGAFDKVASMIRSCNFPEFSYFMKIVMSMVRNEIATCAEKVYSEIPLSNATSLLYLENTKETEKLAEERGWDIRDGVIYFPKEANALETEDGMLIDEEDELELPPTASKHTISSIRQLLSYTSELEQIV.

The PCI domain occupies 65-237; that stretch reads CDIESFARYA…LETEDGMLID (173 aa).

The protein belongs to the proteasome subunit S14 family.

In terms of biological role, acts as a regulatory subunit of the 26S proteasome which is involved in the ATP-dependent degradation of ubiquitinated proteins. This is 26S proteasome regulatory subunit rpn12 (rpn12) from Schizosaccharomyces pombe (strain 972 / ATCC 24843) (Fission yeast).